Consider the following 124-residue polypeptide: Histone H2A, embryonic (124 aa).

Positions 1 to 18 (MSGRGKSGKARTKAKTRS) are enriched in basic residues. The disordered stretch occupies residues 1 to 21 (MSGRGKSGKARTKAKTRSSRA). Serine 2 is modified (N-acetylserine). Phosphoserine is present on serine 2. The residue at position 104 (glutamine 104) is an N5-methylglutamine. Lysine 119 participates in a covalent cross-link: Glycyl lysine isopeptide (Lys-Gly) (interchain with G-Cter in ubiquitin).

This sequence belongs to the histone H2A family. In terms of assembly, the nucleosome is a histone octamer containing two molecules each of H2A, H2B, H3 and H4 assembled in one H3-H4 heterotetramer and two H2A-H2B heterodimers. The octamer wraps approximately 147 bp of DNA. Monoubiquitination of Lys-119 gives a specific tag for epigenetic transcriptional repression. In terms of processing, phosphorylation of Ser-2 directly represses transcription.

The protein localises to the nucleus. It localises to the chromosome. Functionally, core component of nucleosome. Nucleosomes wrap and compact DNA into chromatin, limiting DNA accessibility to the cellular machineries which require DNA as a template. Histones thereby play a central role in transcription regulation, DNA repair, DNA replication and chromosomal stability. DNA accessibility is regulated via a complex set of post-translational modifications of histones, also called histone code, and nucleosome remodeling. In Psammechinus miliaris (Green sea urchin), this protein is Histone H2A, embryonic.